The following is a 548-amino-acid chain: Probable malate:quinone oxidoreductase (548 aa).

The protein belongs to the MQO family. Requires FAD as cofactor.

It carries out the reaction (S)-malate + a quinone = a quinol + oxaloacetate. It functions in the pathway carbohydrate metabolism; tricarboxylic acid cycle; oxaloacetate from (S)-malate (quinone route): step 1/1. The sequence is that of Probable malate:quinone oxidoreductase from Escherichia coli (strain SE11).